A 925-amino-acid polypeptide reads, in one-letter code: Ubp5-interacting protein ftp105 (925 aa).

A compositionally biased stretch (low complexity) spans 650–664; sequence EGSSDFESKSSDNTS. The disordered stretch occupies residues 650-671; the sequence is EGSSDFESKSSDNTSLDGTPLQ.

The protein belongs to the hid-1 family. Interacts with ubp5.

The protein localises to the cytoplasm. It localises to the golgi apparatus. Functionally, required for the localization of ubp5 to the Golgi apparatus. Involved in detoxification of cadmium ion. This Schizosaccharomyces pombe (strain 972 / ATCC 24843) (Fission yeast) protein is Ubp5-interacting protein ftp105 (ftp105).